Reading from the N-terminus, the 631-residue chain is 1-deoxy-D-xylulose-5-phosphate synthase (631 aa).

Positions 1-21 (MPTTFHEIPRERPLTPLLDSA) are disordered. Residues His87 and 128–130 (GHS) contribute to the thiamine diphosphate site. Asp159 provides a ligand contact to Mg(2+). Residues 160 to 161 (GA), Asn188, Phe295, and Glu377 contribute to the thiamine diphosphate site. Asn188 is a binding site for Mg(2+).

Belongs to the transketolase family. DXPS subfamily. As to quaternary structure, homodimer. It depends on Mg(2+) as a cofactor. Thiamine diphosphate is required as a cofactor.

The catalysed reaction is D-glyceraldehyde 3-phosphate + pyruvate + H(+) = 1-deoxy-D-xylulose 5-phosphate + CO2. It participates in metabolic intermediate biosynthesis; 1-deoxy-D-xylulose 5-phosphate biosynthesis; 1-deoxy-D-xylulose 5-phosphate from D-glyceraldehyde 3-phosphate and pyruvate: step 1/1. Functionally, catalyzes the acyloin condensation reaction between C atoms 2 and 3 of pyruvate and glyceraldehyde 3-phosphate to yield 1-deoxy-D-xylulose-5-phosphate (DXP). The sequence is that of 1-deoxy-D-xylulose-5-phosphate synthase from Ectopseudomonas mendocina (strain ymp) (Pseudomonas mendocina).